Here is a 201-residue protein sequence, read N- to C-terminus: Ribonuclease HII (201 aa).

The RNase H type-2 domain maps to 12–201; that stretch reads DLVAGVDEVG…VRELLDASVE (190 aa). A divalent metal cation contacts are provided by Asp-18, Glu-19, and Asp-110.

Belongs to the RNase HII family. It depends on Mn(2+) as a cofactor. The cofactor is Mg(2+).

It is found in the cytoplasm. The enzyme catalyses Endonucleolytic cleavage to 5'-phosphomonoester.. In terms of biological role, endonuclease that specifically degrades the RNA of RNA-DNA hybrids. This is Ribonuclease HII from Pseudomonas paraeruginosa (strain DSM 24068 / PA7) (Pseudomonas aeruginosa (strain PA7)).